The chain runs to 523 residues: GMP synthase [glutamine-hydrolyzing] (523 aa).

In terms of domain architecture, Glutamine amidotransferase type-1 spans Lys8–Lys205. Catalysis depends on Cys85, which acts as the Nucleophile. Active-site residues include His179 and Glu181. Residues Trp206–Arg398 enclose the GMPS ATP-PPase domain. An ATP-binding site is contributed by Ser233–Ser239.

In terms of assembly, homodimer.

It carries out the reaction XMP + L-glutamine + ATP + H2O = GMP + L-glutamate + AMP + diphosphate + 2 H(+). The protein operates within purine metabolism; GMP biosynthesis; GMP from XMP (L-Gln route): step 1/1. Functionally, catalyzes the synthesis of GMP from XMP. This Actinobacillus pleuropneumoniae serotype 5b (strain L20) protein is GMP synthase [glutamine-hydrolyzing].